A 311-amino-acid polypeptide reads, in one-letter code: Malate dehydrogenase (311 aa).

Residues 7 to 13 and Asp34 each bind NAD(+); that span reads GAAGGIG. Arg81 and Arg87 together coordinate substrate. NAD(+)-binding positions include Asn94 and 117 to 119; that span reads ITN. Substrate-binding residues include Asn119 and Arg153. The active-site Proton acceptor is the His177. Met227 contacts NAD(+).

This sequence belongs to the LDH/MDH superfamily. MDH type 1 family. As to quaternary structure, homodimer.

The enzyme catalyses (S)-malate + NAD(+) = oxaloacetate + NADH + H(+). Functionally, catalyzes the reversible oxidation of malate to oxaloacetate. The sequence is that of Malate dehydrogenase from Erwinia tasmaniensis (strain DSM 17950 / CFBP 7177 / CIP 109463 / NCPPB 4357 / Et1/99).